The sequence spans 173 residues: Protein tyrosine phosphatase type IVA 1 (173 aa).

A Tyrosine-protein phosphatase domain is found at 8–161 (APVEVTYKNM…YRPKMRLRFK (154 aa)). Cys49 and Cys104 are joined by a disulfide. The active-site Proton donor is the Asp72. The interval 97–132 (GCCIAVHCVAGLGRAPVLVALALIEGGMKYEDAVQF) is interaction with ATF5. Cys104 functions as the Phosphocysteine intermediate in the catalytic mechanism. 105–110 (VAGLGR) contributes to the phosphate binding site. Position 110 (Arg110) interacts with substrate. Position 170 is a cysteine methyl ester (Cys170). Cys170 carries S-farnesyl cysteine lipidation. Residues 171–173 (CIQ) constitute a propeptide, removed in mature form.

The protein belongs to the protein-tyrosine phosphatase family. In terms of assembly, homotrimer. Interacts with ATF5 and tubulin. Farnesylated. Farnesylation is required for membrane targeting.

Its subcellular location is the cell membrane. The protein resides in the early endosome. It is found in the endoplasmic reticulum. It localises to the cytoplasm. The protein localises to the cytoskeleton. Its subcellular location is the spindle. The protein resides in the nucleus. The enzyme catalyses O-phospho-L-tyrosyl-[protein] + H2O = L-tyrosyl-[protein] + phosphate. Its activity is regulated as follows. Inhibited by sodium orthovanadate and pentamidine. Functionally, protein tyrosine phosphatase which stimulates progression from G1 into S phase during mitosis. May play a role in the development and maintenance of differentiating epithelial tissues. The sequence is that of Protein tyrosine phosphatase type IVA 1 (PTP4A1) from Pongo abelii (Sumatran orangutan).